A 213-amino-acid chain; its full sequence is Thiopurine S-methyltransferase (213 aa).

S-adenosyl-L-methionine is bound by residues W10, L45, E66, and R121.

This sequence belongs to the class I-like SAM-binding methyltransferase superfamily. TPMT family.

It is found in the cytoplasm. The enzyme catalyses S-adenosyl-L-methionine + a thiopurine = S-adenosyl-L-homocysteine + a thiopurine S-methylether.. In Aliivibrio fischeri (strain ATCC 700601 / ES114) (Vibrio fischeri), this protein is Thiopurine S-methyltransferase.